The primary structure comprises 226 residues: Putative mitochondrial outer membrane protein porin 5 (226 aa).

It belongs to the eukaryotic mitochondrial porin (TC 1.B.8.1) family.

Its subcellular location is the mitochondrion outer membrane. Functionally, putative channel that allows diffusion of small hydrophilic molecules through membranes. The polypeptide is Putative mitochondrial outer membrane protein porin 5 (VDAC5) (Arabidopsis thaliana (Mouse-ear cress)).